Reading from the N-terminus, the 333-residue chain is Protoheme IX farnesyltransferase (333 aa).

7 helical membrane passes run 64-84 (LICT…LNCL), 110-130 (TVFL…ISGV), 133-153 (LAAG…TVIL), 161-181 (IVFG…AATG), 189-209 (WLFG…AILL), 246-266 (IMGV…LLPF), and 287-307 (AKSL…LLLI).

It belongs to the UbiA prenyltransferase family. Protoheme IX farnesyltransferase subfamily.

It is found in the cell inner membrane. It carries out the reaction heme b + (2E,6E)-farnesyl diphosphate + H2O = Fe(II)-heme o + diphosphate. It participates in porphyrin-containing compound metabolism; heme O biosynthesis; heme O from protoheme: step 1/1. Its function is as follows. Converts heme B (protoheme IX) to heme O by substitution of the vinyl group on carbon 2 of heme B porphyrin ring with a hydroxyethyl farnesyl side group. In Prochlorococcus marinus (strain MIT 9312), this protein is Protoheme IX farnesyltransferase.